Here is a 1362-residue protein sequence, read N- to C-terminus: Mediator of RNA polymerase II transcription subunit 12 (1362 aa).

The interval 31 to 51 (LRPPDDIHPLVDPARIGDSVY) is disordered.

This sequence belongs to the Mediator complex subunit 12 family. As to quaternary structure, component of the SRB8-11 complex, which itself associates with the Mediator complex.

The protein resides in the nucleus. Functionally, component of the SRB8-11 complex. The SRB8-11 complex is a regulatory module of the Mediator complex which is itself involved in regulation of basal and activated RNA polymerase II-dependent transcription. The SRB8-11 complex may be involved in the transcriptional repression of a subset of genes regulated by Mediator. It may inhibit the association of the Mediator complex with RNA polymerase II to form the holoenzyme complex. This is Mediator of RNA polymerase II transcription subunit 12 (SRB8) from Yarrowia lipolytica (strain CLIB 122 / E 150) (Yeast).